The following is a 248-amino-acid chain: Phosphoribosyl isomerase A (248 aa).

Aspartate 14 acts as the Proton acceptor in catalysis. The active-site Proton donor is the aspartate 133.

Belongs to the HisA/HisF family.

It localises to the cytoplasm. It carries out the reaction 1-(5-phospho-beta-D-ribosyl)-5-[(5-phospho-beta-D-ribosylamino)methylideneamino]imidazole-4-carboxamide = 5-[(5-phospho-1-deoxy-D-ribulos-1-ylimino)methylamino]-1-(5-phospho-beta-D-ribosyl)imidazole-4-carboxamide. It catalyses the reaction N-(5-phospho-beta-D-ribosyl)anthranilate = 1-(2-carboxyphenylamino)-1-deoxy-D-ribulose 5-phosphate. The protein operates within amino-acid biosynthesis; L-histidine biosynthesis; L-histidine from 5-phospho-alpha-D-ribose 1-diphosphate: step 4/9. It participates in amino-acid biosynthesis; L-tryptophan biosynthesis; L-tryptophan from chorismate: step 3/5. Functionally, involved in both the histidine and tryptophan biosynthetic pathways. In Mycobacterium sp. (strain JLS), this protein is Phosphoribosyl isomerase A.